The primary structure comprises 901 residues: Protein SOK1 (901 aa).

Disordered regions lie at residues 1–87 (MDQP…QNII), 106–139 (RSSG…SDLK), and 162–231 (NDDN…NASN). Residues 10 to 51 (PTTASNPAPSSTNSSSAPSATNSKQERSSSSLSKPSSVVPSK) are compositionally biased toward low complexity. Phosphoserine occurs at positions 40 and 53. Polar residues-rich tracts occupy residues 74–87 (GDTS…QNII) and 106–115 (RSSGVITPSM). The segment covering 116–138 (SLNASTNATNNDSSGNSANSSDL) has biased composition (low complexity). Phosphoserine is present on residues Ser-191 and Ser-193. Over residues 220 to 231 (AAQQQPPGNASN) the composition is skewed to polar residues. Position 245 is a phosphoserine (Ser-245).

The protein belongs to the TCP11 family.

It is found in the nucleus. Its function is as follows. High copy suppressor of a cyclic AMP-dependent protein kinase mutant. The chain is Protein SOK1 (SOK1) from Saccharomyces cerevisiae (strain ATCC 204508 / S288c) (Baker's yeast).